The chain runs to 149 residues: MKRTMIVVTTLLLGAGAVMAQQEVAVQQDNLMRSQARSLYTVILKMTKGDIPYDQKAADEAIANLETDVAKIAKTFEVNPKQDVVNATYGASPKVWKNKADFDSKIPPVQKAIAQVKGKITDVASLKAAYTAINDRCTDCHETYRLKLK.

Residues 1–20 (MKRTMIVVTTLLLGAGAVMA) form the signal peptide. The heme c site is built by Met32, Cys137, Cys140, and His141.

Monomer. Binds 1 heme c group covalently per subunit.

It localises to the periplasm. Functionally, low-spin monoheme cytochrome. The chain is Cytochrome c-555 (cycC) from Bradyrhizobium diazoefficiens (strain JCM 10833 / BCRC 13528 / IAM 13628 / NBRC 14792 / USDA 110).